The primary structure comprises 510 residues: Glycogen synthase (510 aa).

Lys18 contributes to the ADP-alpha-D-glucose binding site.

The protein belongs to the glycosyltransferase 1 family. Bacterial/plant glycogen synthase subfamily.

It carries out the reaction [(1-&gt;4)-alpha-D-glucosyl](n) + ADP-alpha-D-glucose = [(1-&gt;4)-alpha-D-glucosyl](n+1) + ADP + H(+). It functions in the pathway glycan biosynthesis; glycogen biosynthesis. Its function is as follows. Synthesizes alpha-1,4-glucan chains using ADP-glucose. The protein is Glycogen synthase of Bordetella parapertussis (strain 12822 / ATCC BAA-587 / NCTC 13253).